Here is a 354-residue protein sequence, read N- to C-terminus: Holliday junction branch migration complex subunit RuvB (354 aa).

The tract at residues 4-190 (TDKLAAERII…FGIVARLEFY (187 aa)) is large ATPase domain (RuvB-L). Residues L29, R30, G71, K74, T75, T76, 137 to 139 (EDY), R180, Y190, and R227 each bind ATP. Mg(2+) is bound at residue T75. The interval 191-261 (DADQLARIVR…VADAALAMLD (71 aa)) is small ATPAse domain (RuvB-S). The tract at residues 264–354 (PVGFDLMDRK…RGMWDTPAGK (91 aa)) is head domain (RuvB-H). DNA-binding residues include R300, R319, and R324.

Belongs to the RuvB family. In terms of assembly, homohexamer. Forms an RuvA(8)-RuvB(12)-Holliday junction (HJ) complex. HJ DNA is sandwiched between 2 RuvA tetramers; dsDNA enters through RuvA and exits via RuvB. An RuvB hexamer assembles on each DNA strand where it exits the tetramer. Each RuvB hexamer is contacted by two RuvA subunits (via domain III) on 2 adjacent RuvB subunits; this complex drives branch migration. In the full resolvosome a probable DNA-RuvA(4)-RuvB(12)-RuvC(2) complex forms which resolves the HJ.

Its subcellular location is the cytoplasm. The enzyme catalyses ATP + H2O = ADP + phosphate + H(+). Functionally, the RuvA-RuvB-RuvC complex processes Holliday junction (HJ) DNA during genetic recombination and DNA repair, while the RuvA-RuvB complex plays an important role in the rescue of blocked DNA replication forks via replication fork reversal (RFR). RuvA specifically binds to HJ cruciform DNA, conferring on it an open structure. The RuvB hexamer acts as an ATP-dependent pump, pulling dsDNA into and through the RuvAB complex. RuvB forms 2 homohexamers on either side of HJ DNA bound by 1 or 2 RuvA tetramers; 4 subunits per hexamer contact DNA at a time. Coordinated motions by a converter formed by DNA-disengaged RuvB subunits stimulates ATP hydrolysis and nucleotide exchange. Immobilization of the converter enables RuvB to convert the ATP-contained energy into a lever motion, pulling 2 nucleotides of DNA out of the RuvA tetramer per ATP hydrolyzed, thus driving DNA branch migration. The RuvB motors rotate together with the DNA substrate, which together with the progressing nucleotide cycle form the mechanistic basis for DNA recombination by continuous HJ branch migration. Branch migration allows RuvC to scan DNA until it finds its consensus sequence, where it cleaves and resolves cruciform DNA. In Burkholderia ambifaria (strain MC40-6), this protein is Holliday junction branch migration complex subunit RuvB.